Here is a 68-residue protein sequence, read N- to C-terminus: Putative alpha-conotoxin Qc alphaL-1 (68 aa).

The first 21 residues, 1–21 (MGMRMMFTMFLLVVLATTVVS), serve as a signal peptide directing secretion. Residues 22–49 (INLDHAFDGRNAAANNKATDLMARTVRR) constitute a propeptide that is removed on maturation. A disulfide bond links cysteine 51 and cysteine 64.

It belongs to the conotoxin A superfamily. In terms of tissue distribution, expressed by the venom duct.

It is found in the secreted. Functionally, alpha-conotoxins act on postsynaptic membranes, they bind to the nicotinic acetylcholine receptors (nAChR) and thus inhibit them. This chain is Putative alpha-conotoxin Qc alphaL-1, found in Conus quercinus (Oak cone).